A 153-amino-acid chain; its full sequence is D-aminoacyl-tRNA deacylase (153 aa).

The Gly-cisPro motif, important for rejection of L-amino acids signature appears at 137 to 138; sequence GP.

This sequence belongs to the DTD family. In terms of assembly, homodimer.

The protein resides in the cytoplasm. The catalysed reaction is glycyl-tRNA(Ala) + H2O = tRNA(Ala) + glycine + H(+). It carries out the reaction a D-aminoacyl-tRNA + H2O = a tRNA + a D-alpha-amino acid + H(+). An aminoacyl-tRNA editing enzyme that deacylates mischarged D-aminoacyl-tRNAs. Also deacylates mischarged glycyl-tRNA(Ala), protecting cells against glycine mischarging by AlaRS. Acts via tRNA-based rather than protein-based catalysis; rejects L-amino acids rather than detecting D-amino acids in the active site. By recycling D-aminoacyl-tRNA to D-amino acids and free tRNA molecules, this enzyme counteracts the toxicity associated with the formation of D-aminoacyl-tRNA entities in vivo and helps enforce protein L-homochirality. This chain is D-aminoacyl-tRNA deacylase, found in Dehalococcoides mccartyi (strain ATCC BAA-2266 / KCTC 15142 / 195) (Dehalococcoides ethenogenes (strain 195)).